A 953-amino-acid chain; its full sequence is Eukaryotic translation initiation factor 3 subunit A (953 aa).

The region spanning 323–504 (LQKMASHVLL…KSISFGLDLH (182 aa)) is the PCI domain. 3 coiled-coil regions span residues 593-642 (QERE…KRQA), 670-704 (MNAD…VDYF), and 732-877 (ENQE…LEER). The disordered stretch occupies residues 603–623 (IKKQKVENQEAEQKRLDEERR). Disordered regions lie at residues 810-861 (ERKK…EIDR) and 893-953 (GWGD…ITMS). Composition is skewed to basic and acidic residues over residues 812 to 861 (KKIE…EIDR), 895 to 919 (GDHE…RGGD), and 928 to 953 (WQRE…ITMS).

Belongs to the eIF-3 subunit A family. Component of the eukaryotic translation initiation factor 3 (eIF-3) complex.

Its subcellular location is the cytoplasm. Its function is as follows. RNA-binding component of the eukaryotic translation initiation factor 3 (eIF-3) complex, which is involved in protein synthesis of a specialized repertoire of mRNAs and, together with other initiation factors, stimulates binding of mRNA and methionyl-tRNAi to the 40S ribosome. The eIF-3 complex specifically targets and initiates translation of a subset of mRNAs involved in cell proliferation. The chain is Eukaryotic translation initiation factor 3 subunit A from Nematostella vectensis (Starlet sea anemone).